A 132-amino-acid chain; its full sequence is Small ribosomal subunit protein uS11 (132 aa).

The protein belongs to the universal ribosomal protein uS11 family. As to quaternary structure, part of the 30S ribosomal subunit.

Located on the platform of the 30S subunit. The polypeptide is Small ribosomal subunit protein uS11 (rps11) (Korarchaeum cryptofilum (strain OPF8)).